A 788-amino-acid chain; its full sequence is 5-methyltetrahydropteroyltriglutamate--homocysteine methyltransferase (788 aa).

5-methyltetrahydropteroyltri-L-glutamate is bound by residues 24–27 and Lys-140; that span reads RELK. Residues 463-465 and Glu-516 contribute to the L-homocysteine site; that span reads IGS. Residues 463-465 and Glu-516 contribute to the L-methionine site; that span reads IGS. 5-methyltetrahydropteroyltri-L-glutamate contacts are provided by residues 547–548 and Trp-593; that span reads RC. Asp-631 contributes to the L-homocysteine binding site. Asp-631 lines the L-methionine pocket. Residue Glu-637 participates in 5-methyltetrahydropteroyltri-L-glutamate binding. Residues His-673, Cys-675, and Glu-697 each coordinate Zn(2+). His-726 serves as the catalytic Proton donor. Cys-758 lines the Zn(2+) pocket.

This sequence belongs to the vitamin-B12 independent methionine synthase family. Requires Zn(2+) as cofactor.

The catalysed reaction is 5-methyltetrahydropteroyltri-L-glutamate + L-homocysteine = tetrahydropteroyltri-L-glutamate + L-methionine. The protein operates within amino-acid biosynthesis; L-methionine biosynthesis via de novo pathway; L-methionine from L-homocysteine (MetE route): step 1/1. Catalyzes the transfer of a methyl group from 5-methyltetrahydrofolate to homocysteine resulting in methionine formation. This chain is 5-methyltetrahydropteroyltriglutamate--homocysteine methyltransferase, found in Rhodopseudomonas palustris (strain TIE-1).